The sequence spans 349 residues: N-acetyltaurine hydrolase (349 aa).

The a divalent metal cation site is built by His-26, His-28, Glu-169, His-201, His-230, and Asp-298.

It belongs to the metallo-dependent hydrolases superfamily. Phosphotriesterase family. The cofactor is a divalent metal cation.

It localises to the cytoplasm. Its subcellular location is the cytosol. The enzyme catalyses N-acetyltaurine + H2O = taurine + acetate. The catalysed reaction is N-propanoyltaurine + H2O = propanoate + taurine. It catalyses the reaction N-acetyl-L-methionine + H2O = L-methionine + acetate. It carries out the reaction N-acetyl-L-isoleucine + H2O = L-isoleucine + acetate. The enzyme catalyses N-acetyl-L-leucine + H2O = L-leucine + acetate. The catalysed reaction is N-acetyl-L-valine + H2O = L-valine + acetate. In terms of biological role, N-acetyltaurine hydrolase that catalyzes the hydrolysis of N-acetyltaurine into taurine and acetate. PTER also acts on other N-acetyl amino acids (Met, Ile, Leu, Val) and N-propionyltaurine, but at lower rates. The polypeptide is N-acetyltaurine hydrolase (pter) (Xenopus tropicalis (Western clawed frog)).